We begin with the raw amino-acid sequence, 206 residues long: Cytidylate kinase (206 aa).

7 to 15 (GPAASGKGT) contacts ATP.

It belongs to the cytidylate kinase family. Type 1 subfamily.

The protein resides in the cytoplasm. The catalysed reaction is CMP + ATP = CDP + ADP. It catalyses the reaction dCMP + ATP = dCDP + ADP. This is Cytidylate kinase from Azorhizobium caulinodans (strain ATCC 43989 / DSM 5975 / JCM 20966 / LMG 6465 / NBRC 14845 / NCIMB 13405 / ORS 571).